Consider the following 810-residue polypeptide: Fibroblast growth factor receptor 1-A (810 aa).

A signal peptide spans 1–26; sequence MKMMMIMKTTLLLISVLLTQALQSQG. Residues 27 to 363 lie on the Extracellular side of the membrane; it reads RPAIQDEAPA…TQLPNQTYLE (337 aa). Ig-like C2-type domains follow at residues 28 to 115, 147 to 235, and 244 to 346; these read PAIQ…FNIS, PDKM…YQLD, and PILQ…AWLT. An intrachain disulfide couples Cys-53 to Cys-99. N-linked (GlcNAc...) asparagine glycosylation is found at Asn-107, Asn-113, Asn-216, Asn-229, Asn-253, Asn-285, Asn-306, Asn-319, and Asn-358. An intrachain disulfide couples Cys-167 to Cys-219. Cys-266 and Cys-330 are oxidised to a cystine. A helical transmembrane segment spans residues 364-384; that stretch reads VLIYCVGFFLICVMVGTAVLA. Over 385 to 810 the chain is Cytoplasmic; that stretch reads KMHSSAKKSD…PNRGVAFKKR (426 aa). Tyr-450 bears the Phosphotyrosine; by autocatalysis mark. The Protein kinase domain maps to 465–754; the sequence is LVLGKPLGEG…LSMTSNQEYL (290 aa). ATP-binding positions include 471–477, Lys-501, 549–551, and Asn-555; these read LGEGCFG and EFA. A phosphotyrosine; by autocatalysis mark is found at Tyr-570 and Tyr-572. Asp-610 (proton acceptor) is an active-site residue. Residues Arg-614 and Asp-628 each coordinate ATP. Phosphotyrosine; by autocatalysis occurs at positions 640, 641, 717, and 753. Positions 787–810 are disordered; that stretch reads AGADEPCLPKFPPHPNRGVAFKKR.

It belongs to the protein kinase superfamily. Tyr protein kinase family. Fibroblast growth factor receptor subfamily. In terms of assembly, monomer. Homodimer after ligand binding. Interacts with cnpy1. In terms of processing, autophosphorylated. Binding of FGF family members together with heparan sulfate proteoglycan or heparin promotes receptor dimerization and autophosphorylation on tyrosine residues. Autophosphorylation occurs in trans between the two FGFR molecules present in the dimer and proceeds in a highly ordered manner. Phosphotyrosine residues provide docking sites for interacting proteins and so are crucial for FGFR1 function and its regulation. Ubiquitinated. FGFR1 is rapidly ubiquitinated after autophosphorylation, leading to internalization and degradation. Post-translationally, N-glycosylated in the endoplasmic reticulum. The N-glycan chains undergo further maturation to an Endo H-resistant form in the Golgi apparatus. Initially expressed in adaxial mesoderm with transcripts distinctly localized to the anterior portion of each half-somite. Hereupon, also strongly expressed in the otic vesicles, branchial arches and the brain, especially at the midbrain-hindbrain boundary (MHB).

The protein localises to the cell membrane. The protein resides in the nucleus. It is found in the cytoplasm. It localises to the cytosol. Its subcellular location is the cytoplasmic vesicle. It carries out the reaction L-tyrosyl-[protein] + ATP = O-phospho-L-tyrosyl-[protein] + ADP + H(+). Present in an inactive conformation in the absence of bound ligand. Ligand binding leads to dimerization and activation by sequential autophosphorylation on tyrosine residues. Its function is as follows. Tyrosine-protein kinase that acts as a cell-surface receptor for fibroblast growth factors and plays an essential role in the regulation of embryonic development, cell proliferation, differentiation and migration. Required for normal mesoderm patterning and normal skeletogenesis. Phosphorylates PLCG1, FRS2, GAB1 and SHB. Ligand binding leads to the activation of several signaling cascades. Activation of PLCG1 leads to the production of the cellular signaling molecules diacylglycerol and inositol-1,4,5-trisphosphate. Phosphorylation of FRS2 triggers recruitment of GRB2, GAB1, PIK3R1 and SOS1, and mediates activation of RAS, MAPK1/ERK2, MAPK3/ERK1 and the MAP kinase signaling pathway, as well as of the AKT1 signaling pathway. Promotes phosphorylation of SHC1, STAT1 and PTPN11/SHP2. In the nucleus, enhances RPS6KA1 and CREB1 activity and contributes to the regulation of transcription. FGFR1 signaling is down-regulated by ubiquitination, internalization and degradation. This chain is Fibroblast growth factor receptor 1-A (fgfr1a), found in Danio rerio (Zebrafish).